A 506-amino-acid chain; its full sequence is Gallate 1-beta-glucosyltransferase 84A23 (506 aa).

His20 (proton acceptor) is an active-site residue. An an anthocyanidin-binding site is contributed by His20. UDP-alpha-D-glucose-binding residues include Gln345, His360, Trp363, Asn364, Ser365, and Glu368. Gly383 serves as a coordination point for an anthocyanidin. UDP-alpha-D-glucose contacts are provided by Asp384 and Gln385.

It belongs to the UDP-glycosyltransferase family. As to expression, expressed in roots of the seedlings.

The protein resides in the cytoplasm. The catalysed reaction is 3,4,5-trihydroxybenzoate + UDP-alpha-D-glucose = 1-O-galloyl-beta-D-glucose + UDP. The enzyme catalyses 3,4-dihydroxybenzoate + UDP-alpha-D-glucose = 1-O-(3,4-dihydroxy-benzoyl)-beta-D-glucose + UDP. It carries out the reaction 4-hydroxybenzoate + UDP-alpha-D-glucose = 4-(beta-D-glucosyloxy)benzoate + UDP + H(+). It catalyses the reaction (E)-cinnamate + UDP-alpha-D-glucose = 1-O-(trans-cinnamoyl)-beta-D-glucose + UDP. The catalysed reaction is (E)-sinapate + UDP-alpha-D-glucose = 1-O-(trans-sinapoyl)-beta-D-glucose + UDP. The enzyme catalyses (E)-4-coumarate + UDP-alpha-D-glucose = 1-O-(trans-4-coumaroyl)-beta-D-glucose + UDP. It carries out the reaction (E)-caffeate + UDP-alpha-D-glucose = 1-O-[(E)-caffeoyl]-beta-D-glucose + UDP. It catalyses the reaction (E)-ferulate + UDP-alpha-D-glucose = 1-O-[(E)-feruloyl]-beta-D-glucose + UDP. The catalysed reaction is genistein + UDP-alpha-D-glucose = genistein 7-O-beta-D-glucoside + UDP + H(+). The enzyme catalyses apigenin + UDP-alpha-D-glucose = apigenin 7-O-beta-D-glucoside + UDP + H(+). It carries out the reaction luteolin + UDP-alpha-D-glucose = luteolin 7-O-beta-D-glucoside + UDP + H(+). Its function is as follows. Glucosyltransferase that catalyzes the formation of 1-O-beta-D-glucose esters with hydroxybenzoic acids and cinnamic acid including its derivatives as preferred glucosyl acceptors. Has significant activity with gallic acid (3,4,5-trihydroxybenzoic acid), 3,4-dihydroxybenzoic acid, 4-hydroxybenzoic acid, cinnamic acid, sinapic acid, coumaric acid, caffeic acid and ferulic acid in vitro. Gallic acid is the predicted native substrate of the enzyme, which thus catalyzes the formation of 1-O-galloyl-beta-D-glucose, the first committed step of hydrolyzable tannins (HTs) biosynthesis, with punicalagin isomers being the major HTs of pomegranate. Catalyzes the formation of flavonoid glucosides with genistein, apigenin and luteolin in vitro. Has low activity with benzoic acid, 2-hydroxybenzoic acid, 3-hydroxybenzoic acid, 2,4-dihydroxybenzoic acid, naringenin and quercetin. No activity with catechol, resveratrol, chlorogenic acid, catechin and epicatechin (building blocks of proanthocyanidins) or cyanidin, delphinidin and pelargonidin (the three anthocyanidins). This Punica granatum (Pomegranate) protein is Gallate 1-beta-glucosyltransferase 84A23.